We begin with the raw amino-acid sequence, 159 residues long: Phosphopantetheine adenylyltransferase (159 aa).

Residue T10 coordinates substrate. ATP is bound by residues 10–11 (TF) and H18. Positions 42, 73, and 87 each coordinate substrate. Residues 88 to 90 (GLR), E98, and 123 to 129 (YSYVSGT) contribute to the ATP site.

It belongs to the bacterial CoaD family. Homohexamer. Requires Mg(2+) as cofactor.

The protein resides in the cytoplasm. It catalyses the reaction (R)-4'-phosphopantetheine + ATP + H(+) = 3'-dephospho-CoA + diphosphate. Its pathway is cofactor biosynthesis; coenzyme A biosynthesis; CoA from (R)-pantothenate: step 4/5. Functionally, reversibly transfers an adenylyl group from ATP to 4'-phosphopantetheine, yielding dephospho-CoA (dPCoA) and pyrophosphate. The sequence is that of Phosphopantetheine adenylyltransferase from Coxiella burnetii (strain CbuK_Q154) (Coxiella burnetii (strain Q154)).